The chain runs to 85 residues: UPF0297 protein Cbei_1105 (85 aa).

This sequence belongs to the UPF0297 family.

In Clostridium beijerinckii (strain ATCC 51743 / NCIMB 8052) (Clostridium acetobutylicum), this protein is UPF0297 protein Cbei_1105.